A 359-amino-acid chain; its full sequence is Phosphoserine aminotransferase (359 aa).

Arg42 serves as a coordination point for L-glutamate. Residues 76-77 (AS), Trp102, Thr152, Asp171, and Gln194 each bind pyridoxal 5'-phosphate. N6-(pyridoxal phosphate)lysine is present on Lys195. Residue 236 to 237 (NT) coordinates pyridoxal 5'-phosphate.

Belongs to the class-V pyridoxal-phosphate-dependent aminotransferase family. SerC subfamily. Homodimer. It depends on pyridoxal 5'-phosphate as a cofactor.

The protein localises to the cytoplasm. The catalysed reaction is O-phospho-L-serine + 2-oxoglutarate = 3-phosphooxypyruvate + L-glutamate. The enzyme catalyses 4-(phosphooxy)-L-threonine + 2-oxoglutarate = (R)-3-hydroxy-2-oxo-4-phosphooxybutanoate + L-glutamate. It functions in the pathway amino-acid biosynthesis; L-serine biosynthesis; L-serine from 3-phospho-D-glycerate: step 2/3. Its pathway is cofactor biosynthesis; pyridoxine 5'-phosphate biosynthesis; pyridoxine 5'-phosphate from D-erythrose 4-phosphate: step 3/5. In terms of biological role, catalyzes the reversible conversion of 3-phosphohydroxypyruvate to phosphoserine and of 3-hydroxy-2-oxo-4-phosphonooxybutanoate to phosphohydroxythreonine. The protein is Phosphoserine aminotransferase of Ruthia magnifica subsp. Calyptogena magnifica.